The sequence spans 151 residues: D-aminoacyl-tRNA deacylase (151 aa).

A Gly-cisPro motif, important for rejection of L-amino acids motif is present at residues 142–143 (GP).

Belongs to the DTD family. In terms of assembly, homodimer.

It is found in the cytoplasm. The catalysed reaction is glycyl-tRNA(Ala) + H2O = tRNA(Ala) + glycine + H(+). It carries out the reaction a D-aminoacyl-tRNA + H2O = a tRNA + a D-alpha-amino acid + H(+). An aminoacyl-tRNA editing enzyme that deacylates mischarged D-aminoacyl-tRNAs. Also deacylates mischarged glycyl-tRNA(Ala), protecting cells against glycine mischarging by AlaRS. Acts via tRNA-based rather than protein-based catalysis; rejects L-amino acids rather than detecting D-amino acids in the active site. By recycling D-aminoacyl-tRNA to D-amino acids and free tRNA molecules, this enzyme counteracts the toxicity associated with the formation of D-aminoacyl-tRNA entities in vivo and helps enforce protein L-homochirality. The chain is D-aminoacyl-tRNA deacylase from Psychrobacter cryohalolentis (strain ATCC BAA-1226 / DSM 17306 / VKM B-2378 / K5).